A 419-amino-acid chain; its full sequence is Napsin-A (419 aa).

Residues 1 to 16 (MSPLLLLLLCLLLGNL) form the signal peptide. The Peptidase A1 domain maps to 73–394 (YFGTIGLGTP…KNVGPRVGLA (322 aa)). The N-linked (GlcNAc...) asparagine glycan is linked to N85. The active site involves D91. Cysteines 104 and 111 form a disulfide. 2 N-linked (GlcNAc...) asparagine glycosylation sites follow: N128 and N149. Cysteines 269 and 273 form a disulfide. The active site involves D278. A disulfide bridge connects residues C312 and C349. N331 carries an N-linked (GlcNAc...) asparagine glycan. The tract at residues 391-419 (VGLARAQSRSTDRAERRTTQAQFFKRRPG) is disordered.

Belongs to the peptidase A1 family. Expressed at the highest levels in the kidney, at a moderate level in the lung, and at low levels in the spleen and adipose tissue.

It is found in the secreted. In terms of biological role, may be involved in processing of pneumocyte surfactant precursors. This Mus musculus (Mouse) protein is Napsin-A (Napsa).